The chain runs to 546 residues: Chaperonin GroEL (546 aa).

ATP-binding positions include 29–32 (TMGP), Lys-50, 86–90 (DGTTT), Gly-414, and Asp-492.

It belongs to the chaperonin (HSP60) family. In terms of assembly, forms a cylinder of 14 subunits composed of two heptameric rings stacked back-to-back. Interacts with the co-chaperonin GroES.

Its subcellular location is the cytoplasm. The enzyme catalyses ATP + H2O + a folded polypeptide = ADP + phosphate + an unfolded polypeptide.. In terms of biological role, together with its co-chaperonin GroES, plays an essential role in assisting protein folding. The GroEL-GroES system forms a nano-cage that allows encapsulation of the non-native substrate proteins and provides a physical environment optimized to promote and accelerate protein folding. The protein is Chaperonin GroEL of Helicobacter acinonychis (strain Sheeba).